We begin with the raw amino-acid sequence, 673 residues long: NADH-quinone oxidoreductase chain 3 (673 aa).

The 86-residue stretch at 5–90 (RKIKIDDTII…PSEIRTNSPM (86 aa)) folds into the 2Fe-2S ferredoxin-type domain. Residues Cys-37, Cys-48, Cys-51, and Cys-66 each contribute to the [2Fe-2S] cluster site. The 40-residue stretch at 90-129 (MVKKAREGVMEFLLINHPLDCPICDQGGECDLQDQAMAYG) folds into the 4Fe-4S His(Cys)3-ligated-type domain. His-106, Cys-110, Cys-113, Cys-119, Cys-158, Cys-161, Cys-164, and Cys-208 together coordinate [4Fe-4S] cluster. The 4Fe-4S Mo/W bis-MGD-type domain occupies 227 to 283 (LTKTESIDVMDALGSSIRIDTKGREVMRILPRNHDGVNEEWISDKTRFVWDGLRRQR).

This sequence belongs to the complex I 75 kDa subunit family. As to quaternary structure, NDH-1 is composed of at least 14 different subunits, Nqo1 to Nqo14. The complex has a L-shaped structure, with the hydrophobic arm (subunits Nqo7, Nqo8, Nqo10 to Nqo14) embedded in the inner membrane and the hydrophilic peripheral arm (subunits Nqo1 to Nqo6, Nqo9) protruding into the bacterial cytoplasm. The hydrophilic domain contains all the redox centers. Requires [2Fe-2S] cluster as cofactor. [4Fe-4S] cluster serves as cofactor.

The protein localises to the cell inner membrane. It catalyses the reaction a quinone + NADH + 5 H(+)(in) = a quinol + NAD(+) + 4 H(+)(out). Functionally, NDH-1 shuttles electrons from NADH, via FMN and iron-sulfur (Fe-S) centers, to quinones in the respiratory chain. The immediate electron acceptor for the enzyme in this species is believed to be ubiquinone. Couples the redox reaction to proton translocation (for every two electrons transferred, four hydrogen ions are translocated across the cytoplasmic membrane), and thus conserves the redox energy in a proton gradient. This chain is NADH-quinone oxidoreductase chain 3, found in Paracoccus denitrificans.